The chain runs to 260 residues: tRNA pseudouridine synthase A (260 aa).

Asp52 serves as the catalytic Nucleophile. Residue Tyr111 participates in substrate binding.

The protein belongs to the tRNA pseudouridine synthase TruA family. In terms of assembly, homodimer.

It catalyses the reaction uridine(38/39/40) in tRNA = pseudouridine(38/39/40) in tRNA. Its function is as follows. Formation of pseudouridine at positions 38, 39 and 40 in the anticodon stem and loop of transfer RNAs. This chain is tRNA pseudouridine synthase A, found in Roseobacter denitrificans (strain ATCC 33942 / OCh 114) (Erythrobacter sp. (strain OCh 114)).